Reading from the N-terminus, the 556-residue chain is Arginine--tRNA ligase (556 aa).

Positions 132–142 (ANPTGDLHLGH) match the 'HIGH' region motif.

Belongs to the class-I aminoacyl-tRNA synthetase family. As to quaternary structure, monomer.

It localises to the cytoplasm. The catalysed reaction is tRNA(Arg) + L-arginine + ATP = L-arginyl-tRNA(Arg) + AMP + diphosphate. This Bacillus cereus (strain ATCC 10987 / NRS 248) protein is Arginine--tRNA ligase.